Here is a 257-residue protein sequence, read N- to C-terminus: NH(3)-dependent NAD(+) synthetase (257 aa).

Position 28–35 (28–35 (GISGGVDS)) interacts with ATP. Aspartate 34 serves as a coordination point for Mg(2+). Arginine 109 provides a ligand contact to deamido-NAD(+). An ATP-binding site is contributed by threonine 129. Glutamate 134 contributes to the Mg(2+) binding site. Deamido-NAD(+) is bound by residues lysine 142 and aspartate 149. Residues lysine 158 and serine 180 each contribute to the ATP site. A deamido-NAD(+)-binding site is contributed by 240-241 (HK).

The protein belongs to the NAD synthetase family. Homodimer.

It carries out the reaction deamido-NAD(+) + NH4(+) + ATP = AMP + diphosphate + NAD(+) + H(+). The protein operates within cofactor biosynthesis; NAD(+) biosynthesis; NAD(+) from deamido-NAD(+) (ammonia route): step 1/1. Its function is as follows. Catalyzes the ATP-dependent amidation of deamido-NAD to form NAD. Uses ammonia as a nitrogen source. The protein is NH(3)-dependent NAD(+) synthetase of Pyrococcus horikoshii (strain ATCC 700860 / DSM 12428 / JCM 9974 / NBRC 100139 / OT-3).